We begin with the raw amino-acid sequence, 333 residues long: Ketol-acid reductoisomerase (NADP(+)) (333 aa).

The KARI N-terminal Rossmann domain occupies 2 to 182 (ANIYYDADCD…GGGRAGILET (181 aa)). NADP(+)-binding positions include 25-28 (YGSQ), Lys48, Ser51, Ser53, and 83-86 (DTIQ). The active site involves His108. Gly134 is an NADP(+) binding site. The KARI C-terminal knotted domain maps to 183 to 331 (SFREETETDL…KKLRSMMKWL (149 aa)). Asp191, Glu195, Glu227, and Glu231 together coordinate Mg(2+). Ser252 provides a ligand contact to substrate.

This sequence belongs to the ketol-acid reductoisomerase family. Mg(2+) is required as a cofactor.

It catalyses the reaction (2R)-2,3-dihydroxy-3-methylbutanoate + NADP(+) = (2S)-2-acetolactate + NADPH + H(+). It carries out the reaction (2R,3R)-2,3-dihydroxy-3-methylpentanoate + NADP(+) = (S)-2-ethyl-2-hydroxy-3-oxobutanoate + NADPH + H(+). It functions in the pathway amino-acid biosynthesis; L-isoleucine biosynthesis; L-isoleucine from 2-oxobutanoate: step 2/4. It participates in amino-acid biosynthesis; L-valine biosynthesis; L-valine from pyruvate: step 2/4. Functionally, involved in the biosynthesis of branched-chain amino acids (BCAA). Catalyzes an alkyl-migration followed by a ketol-acid reduction of (S)-2-acetolactate (S2AL) to yield (R)-2,3-dihydroxy-isovalerate. In the isomerase reaction, S2AL is rearranged via a Mg-dependent methyl migration to produce 3-hydroxy-3-methyl-2-ketobutyrate (HMKB). In the reductase reaction, this 2-ketoacid undergoes a metal-dependent reduction by NADPH to yield (R)-2,3-dihydroxy-isovalerate. This is Ketol-acid reductoisomerase (NADP(+)) from Leptospira borgpetersenii serovar Hardjo-bovis (strain JB197).